Consider the following 153-residue polypeptide: Aspartate carbamoyltransferase regulatory chain (153 aa).

Positions 108, 113, 137, and 140 each coordinate Zn(2+).

The protein belongs to the PyrI family. As to quaternary structure, contains catalytic and regulatory chains. Zn(2+) is required as a cofactor.

Involved in allosteric regulation of aspartate carbamoyltransferase. In Methanosphaera stadtmanae (strain ATCC 43021 / DSM 3091 / JCM 11832 / MCB-3), this protein is Aspartate carbamoyltransferase regulatory chain.